Here is a 1305-residue protein sequence, read N- to C-terminus: Contactin-associated protein like 5-4 (1305 aa).

A signal peptide spans 1-24; the sequence is MNSVRRLNSILTLVLSGLWHLGLT. Over 25-1237 the chain is Extracellular; that stretch reads ATNYNCDEPL…LTDTVQSDSA (1213 aa). One can recognise an F5/8 type C domain in the interval 30–174; it reads CDEPLASFLS…IGMRVEVYGC (145 aa). The cysteines at positions 30 and 174 are disulfide-linked. Laminin G-like domains are found at residues 180-360 and 367-544; these read IVGF…TFSC and PITF…IDLC. A glycan (N-linked (GlcNAc...) asparagine) is linked at N282. C329 and C360 form a disulfide bridge. Residue N496 is glycosylated (N-linked (GlcNAc...) asparagine). 3 cysteine pairs are disulfide-bonded: C512/C544, C550/C561, and C555/C570. The region spanning 546–583 is the EGF-like 1 domain; that stretch reads IKDRCLPNYCEHGGHCAQNWTTFYCNCSDTGYTGATCH. N-linked (GlcNAc...) asparagine glycosylation is present at N571. Cysteines 572 and 582 form a disulfide. Residues 584-790 form the Fibrinogen C-terminal domain; it reads DSVYEQSCEV…LRCYGDRHFW (207 aa). N622 is a glycosylation site (N-linked (GlcNAc...) asparagine). A Laminin G-like 3 domain is found at 791 to 956; it reads NAVSFTTEAS…KLMSGVTPGC (166 aa). 4 disulfides stabilise this stretch: C929/C956, C960/C973, C967/C982, and C984/C994. One can recognise an EGF-like 2 domain in the interval 957–995; that stretch reads LGHCSSYGSNCLNGGKCVEKQSGYSCDCTNSPNEGPFCQ. The region spanning 1014-1198 is the Laminin G-like 4 domain; sequence EPYLVIKNTS…VQGTLTESGC (185 aa). N1057 carries N-linked (GlcNAc...) asparagine glycosylation. C1163 and C1198 are joined by a disulfide. A helical transmembrane segment spans residues 1238 to 1258; it reads VIGGIIALVTFVTFCVIGIMI. Over 1259-1305 the chain is Cytoplasmic; it reads HFLYLHKQSHCTNQTKEKEYSENLSNSFRNAIDLQNTASECKREYFI.

The protein belongs to the neurexin family.

It localises to the membrane. Functionally, may play a role in the correct development and proper functioning of the peripheral and central nervous system and be involved in cell adhesion and intercellular communication. The polypeptide is Contactin-associated protein like 5-4 (Cntnap5d) (Rattus norvegicus (Rat)).